The chain runs to 389 residues: Chaperone protein DnaJ (389 aa).

One can recognise a J domain in the interval 6-70; sequence DYYEVLGLAK…QKKAAYDQYG (65 aa). The CR-type zinc finger occupies 142-224; it reads GVEKEIKYNR…CHGTGHEKKA (83 aa). Zn(2+) contacts are provided by Cys-155, Cys-158, Cys-172, Cys-175, Cys-198, Cys-201, Cys-212, and Cys-215. CXXCXGXG motif repeat units lie at residues 155–162, 172–179, 198–205, and 212–219; these read CATCGGNG, CHKCHGSG, CDVCHGTG, and CPTCHGTG.

The protein belongs to the DnaJ family. Homodimer. The cofactor is Zn(2+).

The protein localises to the cytoplasm. Participates actively in the response to hyperosmotic and heat shock by preventing the aggregation of stress-denatured proteins and by disaggregating proteins, also in an autonomous, DnaK-independent fashion. Unfolded proteins bind initially to DnaJ; upon interaction with the DnaJ-bound protein, DnaK hydrolyzes its bound ATP, resulting in the formation of a stable complex. GrpE releases ADP from DnaK; ATP binding to DnaK triggers the release of the substrate protein, thus completing the reaction cycle. Several rounds of ATP-dependent interactions between DnaJ, DnaK and GrpE are required for fully efficient folding. Also involved, together with DnaK and GrpE, in the DNA replication of plasmids through activation of initiation proteins. This chain is Chaperone protein DnaJ, found in Enterococcus faecalis (strain ATCC 700802 / V583).